We begin with the raw amino-acid sequence, 205 residues long: Glycerol-3-phosphate acyltransferase (205 aa).

Residues 1–3 lie on the Periplasmic side of the membrane; that stretch reads MSA. Residues 4–24 form a helical membrane-spanning segment; that stretch reads IAPGMILFAYLCGSISSAILV. At 25 to 52 the chain is on the cytoplasmic side; the sequence is CRLCGLPDPRTSGSGNPGATNVLRMGGK. The chain crosses the membrane as a helical span at residues 53–73; the sequence is GAALAVLIFDVLKGMLPVWGA. At 74–80 the chain is on the periplasmic side; that stretch reads YELGVSP. The chain crosses the membrane as a helical span at residues 81-101; it reads FWLGLIAIAACLGHIWPIFFG. Residues 102 to 111 are Cytoplasmic-facing; the sequence is FKGGKGVATA. The helical transmembrane segment at 112–132 threads the bilayer; it reads FGAIAPIGWDLTGVMAGTWLL. Residues 133–137 are Periplasmic-facing; the sequence is TVLLS. Residues 138-158 traverse the membrane as a helical segment; it reads GYSSLGAIVSALIAPFYVWWF. Topologically, residues 159–205 are cytoplasmic; it reads KPQFTFPVSMLSCLILLRHHDNIQRLWRRQETKIWTKLKRKREKDPE.

Belongs to the PlsY family. As to quaternary structure, probably interacts with PlsX.

The protein resides in the cell inner membrane. The catalysed reaction is sn-glycerol 3-phosphate + an acyl-CoA = a 1-acyl-sn-glycero-3-phosphate + CoA. It catalyses the reaction a fatty acyl-[ACP] + sn-glycerol 3-phosphate = a 1-acyl-sn-glycero-3-phosphate + holo-[ACP]. The protein operates within lipid metabolism; phospholipid metabolism. Its function is as follows. Catalyzes the transfer of an acyl group from acyl-ACP to glycerol-3-phosphate (G3P) to form lysophosphatidic acid (LPA). This enzyme can also utilize acyl-CoA as fatty acyl donor, but not acyl-PO(4). The chain is Glycerol-3-phosphate acyltransferase from Escherichia fergusonii (strain ATCC 35469 / DSM 13698 / CCUG 18766 / IAM 14443 / JCM 21226 / LMG 7866 / NBRC 102419 / NCTC 12128 / CDC 0568-73).